A 188-amino-acid chain; its full sequence is Apolipophorin-3 (188 aa).

The N-terminal stretch at 1–17 (MVAKLFVLVACIALSHA) is a signal peptide. The propeptide occupies 18–22 (AMVRR).

This sequence belongs to the insect apolipophorin-3 family. As to quaternary structure, equilibrium between a soluble monomer and a bound lipoprotein form. Apolipophorin-3 associates with lipophorin during lipid loading until each particle contains 9 or 14 molecules of apolipophorin-3. Expressed in fat body and secreted in hemolymph. Also expressed in ovary and testis at lower levels.

The protein localises to the secreted. In terms of biological role, assists in the loading of diacylglycerol, generated from triacylglycerol stores in the fat body through the action of adipokinetic hormone, into lipophorin, the hemolymph lipoprotein. It increases the lipid carrying capacity of lipophorin by covering the expanding hydrophobic surface resulting from diacylglycerol uptake. It thus plays a critical role in the transport of lipids during flight in several species of insects. This is Apolipophorin-3 from Spodoptera litura (Asian cotton leafworm).